Consider the following 363-residue polypeptide: Biotin synthase (363 aa).

Phosphoserine is present on residues serine 13, serine 14, and serine 17. The region spanning 54–276 (KKVQQCTLLS…IATARICMPK (223 aa)) is the Radical SAM core domain. Positions 69, 73, and 76 each coordinate [4Fe-4S] cluster. The [2Fe-2S] cluster site is built by cysteine 113, cysteine 146, cysteine 206, and arginine 280. Positions 337-363 (EYGTSTEGEDGTFTLPPKERLAPSPSL) are disordered.

Belongs to the radical SAM superfamily. Biotin synthase family. [4Fe-4S] cluster serves as cofactor. It depends on [2Fe-2S] cluster as a cofactor.

It catalyses the reaction (4R,5S)-dethiobiotin + (sulfur carrier)-SH + 2 reduced [2Fe-2S]-[ferredoxin] + 2 S-adenosyl-L-methionine = (sulfur carrier)-H + biotin + 2 5'-deoxyadenosine + 2 L-methionine + 2 oxidized [2Fe-2S]-[ferredoxin]. Its pathway is cofactor biosynthesis; biotin biosynthesis; biotin from 7,8-diaminononanoate: step 2/2. In terms of biological role, catalyzes the last step of biotin biosynthesis, the conversion of dethiobiotin to biotin. This Schizosaccharomyces pombe (strain 972 / ATCC 24843) (Fission yeast) protein is Biotin synthase (bio2).